A 276-amino-acid chain; its full sequence is Sulfur carrier protein FdhD (276 aa).

The Cysteine persulfide intermediate role is filled by Cys122. Position 259–264 (Phe259–Lys264) interacts with Mo-bis(molybdopterin guanine dinucleotide).

Belongs to the FdhD family.

It localises to the cytoplasm. Functionally, required for formate dehydrogenase (FDH) activity. Acts as a sulfur carrier protein that transfers sulfur from IscS to the molybdenum cofactor prior to its insertion into FDH. The polypeptide is Sulfur carrier protein FdhD (Photorhabdus laumondii subsp. laumondii (strain DSM 15139 / CIP 105565 / TT01) (Photorhabdus luminescens subsp. laumondii)).